We begin with the raw amino-acid sequence, 185 residues long: Ribulose bisphosphate carboxylase small subunit, chloroplastic 2 (185 aa).

The transit peptide at 1-45 (MAAVIAKSSVSAAVARPARSSVRPMAALKPAVKAAPVAAPAQANQ) directs the protein to the chloroplast. Methionine 46 is modified (N-methylmethionine).

Belongs to the RuBisCO small chain family. Heterohexadecamer of 8 large and 8 small subunits.

It localises to the plastid. It is found in the chloroplast. The protein localises to the chloroplast stroma. Its function is as follows. RuBisCO catalyzes two reactions: the carboxylation of D-ribulose 1,5-bisphosphate, the primary event in carbon dioxide fixation, as well as the oxidative fragmentation of the pentose substrate. Both reactions occur simultaneously and in competition at the same active site. Although the small subunit is not catalytic it is essential for maximal activity. The protein is Ribulose bisphosphate carboxylase small subunit, chloroplastic 2 of Chlamydomonas reinhardtii (Chlamydomonas smithii).